The sequence spans 499 residues: Glutamyl-tRNA(Gln) amidotransferase subunit A (499 aa).

Catalysis depends on charge relay system residues K75 and S150. The active-site Acyl-ester intermediate is the S174.

This sequence belongs to the amidase family. GatA subfamily. As to quaternary structure, heterotrimer of A, B and C subunits.

The enzyme catalyses L-glutamyl-tRNA(Gln) + L-glutamine + ATP + H2O = L-glutaminyl-tRNA(Gln) + L-glutamate + ADP + phosphate + H(+). Allows the formation of correctly charged Gln-tRNA(Gln) through the transamidation of misacylated Glu-tRNA(Gln) in organisms which lack glutaminyl-tRNA synthetase. The reaction takes place in the presence of glutamine and ATP through an activated gamma-phospho-Glu-tRNA(Gln). The sequence is that of Glutamyl-tRNA(Gln) amidotransferase subunit A from Ralstonia pickettii (strain 12J).